Consider the following 550-residue polypeptide: Formin-binding protein 1-like (550 aa).

In terms of domain architecture, F-BAR spans M1–D263. Coiled coils occupy residues F66 to V258 and L334 to E426. The REM-1 domain occupies H339 to E416. Residues Q423–E432 are compositionally biased toward basic and acidic residues. Residues Q423–E467 form a disordered region. The 62-residue stretch at P479–E540 folds into the SH3 domain.

Belongs to the FNBP1 family. As to quaternary structure, homodimerizes, the dimers can polymerize end-to-end to form filamentous structures. Interacts with GTP-bound cdc42 and wasl/n-wasp.

Its subcellular location is the cytoplasm. The protein resides in the cytoskeleton. It localises to the cell cortex. It is found in the cytoplasmic vesicle. The protein localises to the cell membrane. Its function is as follows. Required to coordinate membrane tubulation with reorganization of the actin cytoskeleton during endocytosis. Promotes cdc42-induced actin polymerization by activating the wasl-waspip complex, the predominant form of wasl/n-wasp in cells. Essential for autophagy of intracellular bacterial pathogens. This chain is Formin-binding protein 1-like (fnbp1l), found in Xenopus tropicalis (Western clawed frog).